The primary structure comprises 99 residues: Large ribosomal subunit protein uL23c (99 aa).

Belongs to the universal ribosomal protein uL23 family. In terms of assembly, part of the 50S ribosomal subunit.

The protein resides in the plastid. It is found in the chloroplast. Binds to 23S rRNA. The polypeptide is Large ribosomal subunit protein uL23c (rpl23) (Emiliania huxleyi (Coccolithophore)).